The sequence spans 127 residues: Small ribosomal subunit protein bS6 (127 aa).

Belongs to the bacterial ribosomal protein bS6 family.

Functionally, binds together with bS18 to 16S ribosomal RNA. In Acinetobacter baumannii (strain AB0057), this protein is Small ribosomal subunit protein bS6.